The chain runs to 129 residues: Replication initiation control protein YabA (129 aa).

Zn(2+) is bound by residues H103, C105, C119, and C122.

Belongs to the YabA family. In terms of assembly, homotetramer. Interacts with both DnaA and DnaN, acting as a bridge between these two proteins. Requires Zn(2+) as cofactor.

Its subcellular location is the cytoplasm. It localises to the nucleoid. Functionally, involved in control of chromosome replication initiation. Inhibits the cooperative binding of DnaA to the oriC region, thus negatively regulating initiation of chromosome replication. Inhibits the ability of DnaA-ATP to form a helix on DNA; does not disassemble preformed DnaA-DNA helices. Decreases the residence time of DnaA on the chromosome at its binding sites (oriC, replication forks and promoter-binding sites). Tethers DnaA to the replication machinery via the DNA polymerase beta sliding clamp subunit (dnaN). Associates with oriC and other DnaA targets on the chromosome in a DnaA-dependent manner. The protein is Replication initiation control protein YabA of Listeria welshimeri serovar 6b (strain ATCC 35897 / DSM 20650 / CCUG 15529 / CIP 8149 / NCTC 11857 / SLCC 5334 / V8).